Consider the following 268-residue polypeptide: Testis-specific serine/threonine-protein kinase 3 (268 aa).

Residues 10–265 (YQLGKTIGEG…IEEVSWHPWL (256 aa)) enclose the Protein kinase domain. ATP-binding positions include 16–24 (IGEGTYSKV) and Lys39. Asp134 acts as the Proton acceptor in catalysis. Ser166 carries the phosphoserine; by autocatalysis modification. Phosphothreonine; by PDPK1 is present on Thr168.

It belongs to the protein kinase superfamily. CAMK Ser/Thr protein kinase family. Mg(2+) is required as a cofactor. The cofactor is Mn(2+). Post-translationally, autophosphorylated at Ser-166. Phosphorylation at Thr-168 by PDPK1 activates the serine/threonine protein kinase activity. In terms of tissue distribution, developmentally expressed in testicular germ cells. In adult testis, expression was detected in round and condensing spermatids, but not in meiotic pachytene spermatocytes. Not expressed in brain, ovary, kidney, liver or early embryonic cells.

The protein resides in the cell projection. Its subcellular location is the cilium. It localises to the flagellum. The catalysed reaction is L-seryl-[protein] + ATP = O-phospho-L-seryl-[protein] + ADP + H(+). The enzyme catalyses L-threonyl-[protein] + ATP = O-phospho-L-threonyl-[protein] + ADP + H(+). With respect to regulation, activated by phosphorylation on Thr-168 by PDPK1. Serine/threonine protein kinase required for spermatid development and male fertility. This is Testis-specific serine/threonine-protein kinase 3 from Mus musculus (Mouse).